Consider the following 268-residue polypeptide: Interleukin-1 beta (268 aa).

Positions 1 to 116 (MAEVPELASE…TRNNDACVHD (116 aa)) are excised as a propeptide.

This sequence belongs to the IL-1 family. Monomer. In its precursor form, weakly interacts with full-length MEFV; the mature cytokine does not interact at all. Interacts with integrins ITGAV:ITGBV and ITGA5:ITGB1; integrin-binding is required for IL1B signaling. Interacts with cargo receptor TMED10; the interaction is direct and is required for the secretion of IL1B mature form. Interacts with HSP90AB1; the interaction facilitates cargo translocation into the ERGIC. Interacts with HSP90B1; the interaction facilitates cargo translocation into the ERGIC.

It is found in the cytoplasm. The protein localises to the cytosol. Its subcellular location is the secreted. The protein resides in the lysosome. It localises to the extracellular exosome. Functionally, potent pro-inflammatory cytokine. Initially discovered as the major endogenous pyrogen, induces prostaglandin synthesis, neutrophil influx and activation, T-cell activation and cytokine production, B-cell activation and antibody production, and fibroblast proliferation and collagen production. Promotes Th17 differentiation of T-cells. Synergizes with IL12/interleukin-12 to induce IFNG synthesis from T-helper 1 (Th1) cells. Plays a role in angiogenesis by inducing VEGF production synergistically with TNF and IL6. Involved in transduction of inflammation downstream of pyroptosis: its mature form is specifically released in the extracellular milieu by passing through the gasdermin-D (GSDMD) pore. The polypeptide is Interleukin-1 beta (IL1B) (Macaca fascicularis (Crab-eating macaque)).